We begin with the raw amino-acid sequence, 353 residues long: UPF0283 membrane protein YcjF (353 aa).

3 consecutive transmembrane segments (helical) span residues 70–90, 100–120, and 213–233; these read MVMG…VQWT, VALG…GSVV, and ESTL…FIAW.

This sequence belongs to the UPF0283 family.

The protein localises to the cell inner membrane. In Shigella sonnei (strain Ss046), this protein is UPF0283 membrane protein YcjF.